Consider the following 154-residue polypeptide: Universal stress protein Sll1388 (154 aa).

This sequence belongs to the universal stress protein A family.

The protein is Universal stress protein Sll1388 of Synechocystis sp. (strain ATCC 27184 / PCC 6803 / Kazusa).